A 520-amino-acid polypeptide reads, in one-letter code: ATP synthase subunit alpha 2 (520 aa).

Residue 176–183 (GDRQTGKT) coordinates ATP.

The protein belongs to the ATPase alpha/beta chains family. In terms of assembly, F-type ATPases have 2 components, CF(1) - the catalytic core - and CF(0) - the membrane proton channel. CF(1) has five subunits: alpha(3), beta(3), gamma(1), delta(1), epsilon(1). CF(0) has three main subunits: a(1), b(2) and c(9-12). The alpha and beta chains form an alternating ring which encloses part of the gamma chain. CF(1) is attached to CF(0) by a central stalk formed by the gamma and epsilon chains, while a peripheral stalk is formed by the delta and b chains.

It is found in the cell inner membrane. It catalyses the reaction ATP + H2O + 4 H(+)(in) = ADP + phosphate + 5 H(+)(out). Its function is as follows. Produces ATP from ADP in the presence of a proton gradient across the membrane. The alpha chain is a regulatory subunit. In Polaromonas naphthalenivorans (strain CJ2), this protein is ATP synthase subunit alpha 2.